A 187-amino-acid polypeptide reads, in one-letter code: Ribosome-recycling factor (187 aa).

The protein belongs to the RRF family.

It is found in the cytoplasm. Functionally, responsible for the release of ribosomes from messenger RNA at the termination of protein biosynthesis. May increase the efficiency of translation by recycling ribosomes from one round of translation to another. This Petrotoga mobilis (strain DSM 10674 / SJ95) protein is Ribosome-recycling factor.